A 491-amino-acid chain; its full sequence is Cytochrome P450 monooxygenase 521A1 (491 aa).

A helical transmembrane segment spans residues 1 to 21 (MILLTLLYLIIFYIIIDFIKK). Residue Cys438 participates in heme binding.

Belongs to the cytochrome P450 family. The cofactor is heme.

Its subcellular location is the membrane. It catalyses the reaction discoidol + reduced [NADPH--hemoprotein reductase] + O2 = discodiene + acetone + oxidized [NADPH--hemoprotein reductase] + 2 H2O + H(+). It participates in sesquiterpene biosynthesis. Its function is as follows. Cytochrome P450 monooxygenase; part of the gene cluster that mediates the biosynthesis of the trisnorsesquiterpene discodiene which has a function during later stages of multicellular development, during the transition from fingers to Mexican hats. The terpene synthase tps8 converts its substrate farnesyl diphosphate (FDP) into the bicyclic sesquiterpene alcohol discoidol. The cytochrome P450 monooxygenase cyp521A1 then catalyzes the oxidative degradation of discoidol to form the trisnorsesquiterpene discodiene. This chain is Cytochrome P450 monooxygenase 521A1 (cyp521A1), found in Dictyostelium discoideum (Social amoeba).